The primary structure comprises 612 residues: uncharacterized protein (612 aa).

This is an uncharacterized protein from Rickettsia prowazekii (strain Madrid E).